A 150-amino-acid chain; its full sequence is MQIILLEKVANLGNLGDIVKVKDGYARNFLIPNRKARRATKDAIAEFEVRRAELEKVAAEKLAAAQAVGEKLNGQTFEITQKSGVDGRLFGSVTNGDVAELLKKAGYEIEKAQVRMPEGPLKMIGEHGVQVALHTDVLVDVTVNVIGDHA.

It belongs to the bacterial ribosomal protein bL9 family.

In terms of biological role, binds to the 23S rRNA. The polypeptide is Large ribosomal subunit protein bL9 (Burkholderia pseudomallei (strain 668)).